A 220-amino-acid polypeptide reads, in one-letter code: NADH-quinone oxidoreductase subunit I (220 aa).

4Fe-4S ferredoxin-type domains lie at 71–102 (LQRL…IITH) and 112–141 (DSYT…MGNR). Positions 82, 85, 88, 92, 121, 124, 127, and 131 each coordinate [4Fe-4S] cluster. A disordered region spans residues 187–220 (MQATPLDYVQEPSKEESKEETPTNPESNKGDENV). Positions 198–207 (PSKEESKEET) are enriched in basic and acidic residues.

The protein belongs to the complex I 23 kDa subunit family. In terms of assembly, NDH-1 is composed of 14 different subunits. Subunits NuoA, H, J, K, L, M, N constitute the membrane sector of the complex. Requires [4Fe-4S] cluster as cofactor.

Its subcellular location is the cell inner membrane. It catalyses the reaction a quinone + NADH + 5 H(+)(in) = a quinol + NAD(+) + 4 H(+)(out). NDH-1 shuttles electrons from NADH, via FMN and iron-sulfur (Fe-S) centers, to quinones in the respiratory chain. The immediate electron acceptor for the enzyme in this species is believed to be ubiquinone. Couples the redox reaction to proton translocation (for every two electrons transferred, four hydrogen ions are translocated across the cytoplasmic membrane), and thus conserves the redox energy in a proton gradient. The sequence is that of NADH-quinone oxidoreductase subunit I from Helicobacter pylori (strain Shi470).